The sequence spans 423 residues: MTNLKNLRGMLDLLPAQSQGWQKVESIALEHFSRAGLQEIRTPILEQTELFSRGIGENTDVVGKEMYSFDDRGGRSCTLRPEGTAPVARSIIQHGLLNNGPQRLWYRGPMFRYERPQAGRQRQFHQIGVEFVGLASVMSDAEVISIAWNFLKDVGLNDLTLEINSLGSNEDRNIFKEELKDWLNQRFDLLDEDSQKRINVNPLRILDSKNNSTKELLSEAPSLNDFLSSESKTRFDYLQELLVNLKIPYKINYNLVRGLDYYSHTAFEITSDHLGSQATVCGGGRYDGLISELGGPQAPSIGWAIGMERLVILAGDKILQTKSPDVYVIHKGKKAEQLALEITCQLRSSNLIIELDYSGSSFSKQFKRADKSRAKWALVIGEDEVSKGQLLMKKLRDKQKDEESREYIFSKGDLDQLIKKLIA.

The protein belongs to the class-II aminoacyl-tRNA synthetase family. Homodimer.

The protein localises to the cytoplasm. The enzyme catalyses tRNA(His) + L-histidine + ATP = L-histidyl-tRNA(His) + AMP + diphosphate + H(+). In Prochlorococcus marinus (strain NATL1A), this protein is Histidine--tRNA ligase.